The chain runs to 369 residues: 3 beta-hydroxysteroid dehydrogenase type 7 (369 aa).

Residue tyrosine 159 is the Proton acceptor of the active site. Lysine 163 contacts NAD(+). The next 2 helical transmembrane spans lie at 289–309 (LLPY…QWLL) and 312–334 (LVLY…FTVS).

This sequence belongs to the 3-beta-HSD family. Predominantly expressed in liver.

The protein localises to the endoplasmic reticulum membrane. It carries out the reaction 7alpha-hydroxycholesterol + NAD(+) = 7alpha-hydroxycholest-4-en-3-one + NADH + H(+). The catalysed reaction is 7alpha,25-dihydroxycholesterol + NAD(+) = 7alpha,25-dihydroxy-4-cholesten-3-one + NADH + H(+). It catalyses the reaction (25R)-cholest-5-en-3beta,7alpha,26-triol + NAD(+) = (25R)-7alpha,26-dihydroxycholest-4-en-3-one + NADH + H(+). The enzyme catalyses (24S)-7alpha-dihydroxycholesterol + NAD(+) = (24S)-7alpha,24-dihydroxycholest-4-en-3-one + NADH + H(+). It functions in the pathway lipid metabolism; steroid biosynthesis. Its function is as follows. The 3-beta-HSD enzymatic system plays a crucial role in the biosynthesis of all classes of hormonal steroids. HSD VII is active against four 7-alpha-hydroxylated sterols. Does not metabolize several different C(19/21) steroids as substrates. Involved in bile acid synthesis. Plays a key role in cell positioning and movement in lymphoid tissues by mediating degradation of 7-alpha,25-dihydroxycholesterol (7-alpha,25-OHC): 7-alpha,25-OHC acts as a ligand for the G protein-coupled receptor GPR183/EBI2, a chemotactic receptor for a number of lymphoid cells. In Mus musculus (Mouse), this protein is 3 beta-hydroxysteroid dehydrogenase type 7.